The sequence spans 741 residues: Catalase-peroxidase (741 aa).

Positions 1–23 are cleaved as a signal peptide; it reads MLKKIVTALGMSGMLLASSNAIA. A cross-link (tryptophyl-tyrosyl-methioninium (Trp-Tyr) (with M-249)) is located at residues 102–223; it reads WHDAGTYRIY…YAATQMGLIY (122 aa). The active-site Proton acceptor is histidine 103. The tryptophyl-tyrosyl-methioninium (Tyr-Met) (with W-102) cross-link spans 223 to 249; the sequence is YVNPEGPDGKPDIKGAASEIRQAFRAM. Residue histidine 264 participates in heme b binding.

It belongs to the peroxidase family. Peroxidase/catalase subfamily. In terms of assembly, homodimer or homotetramer. Requires heme b as cofactor. In terms of processing, formation of the three residue Trp-Tyr-Met cross-link is important for the catalase, but not the peroxidase activity of the enzyme.

The catalysed reaction is H2O2 + AH2 = A + 2 H2O. It carries out the reaction 2 H2O2 = O2 + 2 H2O. Functionally, bifunctional enzyme with both catalase and broad-spectrum peroxidase activity. This chain is Catalase-peroxidase, found in Francisella tularensis subsp. tularensis (strain FSC 198).